The primary structure comprises 1070 residues: DNA-directed RNA polymerase subunit beta (1070 aa).

Belongs to the RNA polymerase beta chain family. As to quaternary structure, in plastids the minimal PEP RNA polymerase catalytic core is composed of four subunits: alpha, beta, beta', and beta''. When a (nuclear-encoded) sigma factor is associated with the core the holoenzyme is formed, which can initiate transcription.

It is found in the plastid. Its subcellular location is the chloroplast. It carries out the reaction RNA(n) + a ribonucleoside 5'-triphosphate = RNA(n+1) + diphosphate. Its function is as follows. DNA-dependent RNA polymerase catalyzes the transcription of DNA into RNA using the four ribonucleoside triphosphates as substrates. The polypeptide is DNA-directed RNA polymerase subunit beta (Angiopteris evecta (Mule's foot fern)).